Consider the following 402-residue polypeptide: MNVLVINAGSSSCKYQLINMESEGVLCAGLVERIGEATGKLAHKIAPDTDSEEKIVLEQPFPNHVEAMKKVVELITDPEKGVIKDKSEIYAIGHRVLLGGEEIKESVKIDEWAKGVIRDYIPLGPLHNPANLAGIEVAEELFPGVPSVGVFDTEFHQTMPAKAYLYPLPLELYEEMKIRRYGFHGTSHRYVTKKTAEFLGKPLDEVNIITCHLGNGCSMAAVKNGKCVDTTMGITPLEGLMMGTRCGDIDPAIVPFLMEKKGLTTAEADTLMNKQSGLKGVCGMNDMRDIHAAVEKGDEKAKLALDMFVYRIKKYIGAFYAALGRVDAVVFTAGIGENDDIVRAEVCENMDVFGIALDAEKNKIRSGEPRNIAAENSKVAVLVVPTNEELEIAQAAVNVLKG.

Asn-7 lines the Mg(2+) pocket. Lys-14 provides a ligand contact to ATP. Arg-95 provides a ligand contact to substrate. Asp-152 acts as the Proton donor/acceptor in catalysis. ATP contacts are provided by residues His-212–Gly-216, Asp-286–Arg-288, and Gly-334–Asn-338. Glu-388 contributes to the Mg(2+) binding site.

Belongs to the acetokinase family. In terms of assembly, homodimer. Requires Mg(2+) as cofactor. It depends on Mn(2+) as a cofactor.

The protein localises to the cytoplasm. It catalyses the reaction acetate + ATP = acetyl phosphate + ADP. It participates in metabolic intermediate biosynthesis; acetyl-CoA biosynthesis; acetyl-CoA from acetate: step 1/2. Catalyzes the formation of acetyl phosphate from acetate and ATP. Can also catalyze the reverse reaction. In Oleidesulfovibrio alaskensis (strain ATCC BAA-1058 / DSM 17464 / G20) (Desulfovibrio alaskensis), this protein is Acetate kinase.